The following is a 330-amino-acid chain: Elongation factor Ts (330 aa).

Residues 79 to 82 are involved in Mg(2+) ion dislocation from EF-Tu; sequence TDFV.

This sequence belongs to the EF-Ts family.

The protein resides in the cytoplasm. Its function is as follows. Associates with the EF-Tu.GDP complex and induces the exchange of GDP to GTP. It remains bound to the aminoacyl-tRNA.EF-Tu.GTP complex up to the GTP hydrolysis stage on the ribosome. The protein is Elongation factor Ts of Bacteroides fragilis (strain ATCC 25285 / DSM 2151 / CCUG 4856 / JCM 11019 / LMG 10263 / NCTC 9343 / Onslow / VPI 2553 / EN-2).